Consider the following 315-residue polypeptide: Secreted mono- and diacylglycerol lipase LIP2 (315 aa).

Residues 1–21 form the signal peptide; that stretch reads MACFRVILYLSVIFFVQCVFA. A disulfide bridge connects residues C68 and C308. N-linked (GlcNAc...) asparagine glycosylation is present at N74. S182 serves as the catalytic Nucleophile. D240 is a catalytic residue. An N-linked (GlcNAc...) asparagine glycan is attached at N265. H292 is a catalytic residue.

The protein belongs to the AB hydrolase superfamily. Lipase family. Class 3 subfamily.

The protein localises to the secreted. It carries out the reaction a monoacylglycerol + H2O = glycerol + a fatty acid + H(+). It catalyses the reaction a diacylglycerol + H2O = a monoacylglycerol + a fatty acid + H(+). Secreted lipase involved in Dandruff and seborrheic dermatitis (D/SD) probably via lipase-mediated breakdown of sebaceous lipids and release of irritating free fatty acids. Shows activity against monoglyceride and diglyceride substrates and generates free oleic acid from the substrates mono- and diolein. Able to cleave the oleic acid from both the 1 and the 2 position of the glycerol backbone as 1,2 isomers of diolein were converted into oleic acid and glycerol. Due to an absence of fatty acid synthase genes in Malassezia species, secretory lipases are essential for the yeast to generate free fatty acids from degradation of sebum and assimilate them as lipid sources for growth. Plays an essential role at the pathogen-host interface during disease progression. Also performs the reverse reaction to build diacylglycerols from monoacylglycerols. This is Secreted mono- and diacylglycerol lipase LIP2 from Malassezia restricta (Seborrheic dermatitis infection agent).